Reading from the N-terminus, the 296-residue chain is MAKYLGIDVGATWTRAILVDEGGSVLSRAKIRTGVSPVAEIAEVVAGWDFDAVGVGSIGPMDLKTGVVVNSPNSPSRRFPLVEPLKKFKRPVVVANDCVAAVWGEYVFKYHVDNMAYLTLSTGVGVGAIVNGVLLLGKDGNAHELGHAVIDFKSPRRCGCGGLGHFEAFVGGANMPSFYQEVAGEGPLLPEEIFKRAREGYRKAVEFLDVWLDALAAGVATILAAYDPELLIVGGSIALNNWDIVGRELPKRLVKYLGVRGAEIRPASFGDDEVAIGAAALAYKTPETLKKFGYPR.

The protein belongs to the ROK (NagC/XylR) family. In terms of assembly, homodimer. A divalent metal cation serves as cofactor.

The catalysed reaction is D-glucose + ATP = D-glucose 6-phosphate + ADP + H(+). Its function is as follows. Catalyzes the phosphorylation of D-glucose to D-glucose 6-phosphate using ATP as the phosphate donor. Has a broad hexose specificity, and in addition to glucose, which shows the highest catalytic efficiency, it can also phosphorylate fructose, mannose, galactose and sorbitol. Can also use CTP, GTP or UTP as phosphoryl donor. This is Glucokinase from Pyrobaculum calidifontis (strain DSM 21063 / JCM 11548 / VA1).